A 474-amino-acid polypeptide reads, in one-letter code: Ribulose bisphosphate carboxylase large chain (474 aa).

Substrate is bound by residues N122 and T172. Catalysis depends on K174, which acts as the Proton acceptor. K176 serves as a coordination point for substrate. Positions 200, 202, and 203 each coordinate Mg(2+). K200 carries the N6-carboxylysine modification. H293 acts as the Proton acceptor in catalysis. Residues R294, H326, and S378 each contribute to the substrate site.

Belongs to the RuBisCO large chain family. Type I subfamily. Heterohexadecamer of 8 large chains and 8 small chains; disulfide-linked. The disulfide link is formed within the large subunit homodimers. Mg(2+) serves as cofactor. In terms of processing, the disulfide bond which can form in the large chain dimeric partners within the hexadecamer appears to be associated with oxidative stress and protein turnover.

Its subcellular location is the carboxysome. It catalyses the reaction 2 (2R)-3-phosphoglycerate + 2 H(+) = D-ribulose 1,5-bisphosphate + CO2 + H2O. The catalysed reaction is D-ribulose 1,5-bisphosphate + O2 = 2-phosphoglycolate + (2R)-3-phosphoglycerate + 2 H(+). In terms of biological role, ruBisCO catalyzes two reactions: the carboxylation of D-ribulose 1,5-bisphosphate, the primary event in carbon dioxide fixation, as well as the oxidative fragmentation of the pentose substrate in the photorespiration process. Both reactions occur simultaneously and in competition at the same active site. The polypeptide is Ribulose bisphosphate carboxylase large chain (Gloeobacter violaceus (strain ATCC 29082 / PCC 7421)).